Here is a 194-residue protein sequence, read N- to C-terminus: MKIWTSEHVFDHPWETVTTAAMQKYPNPMNPSVVGVDVLDRHIDPSGKLHSHRLLSTEWGLPSIVKSIIGAARTKTYVQEHSVVDPVEKTMELKSTNISFTNMVSVDERLIYKPHPQDPEKTILTQEAIITVKGVSLGSYLEGLMASTISSNANKGREAMEWVIHKLNAEIEELTASARGSIRTPMAAAAFVEK.

Residues 1–172 form the PRELI/MSF1 domain; that stretch reads MKIWTSEHVF…VIHKLNAEIE (172 aa). S46 and S51 each carry phosphoserine.

This sequence belongs to the slowmo family.

The polypeptide is PRELI domain containing protein 3B (PRELID3B) (Bos taurus (Bovine)).